The sequence spans 255 residues: Indole-3-glycerol phosphate synthase (255 aa).

It belongs to the TrpC family.

It carries out the reaction 1-(2-carboxyphenylamino)-1-deoxy-D-ribulose 5-phosphate + H(+) = (1S,2R)-1-C-(indol-3-yl)glycerol 3-phosphate + CO2 + H2O. It participates in amino-acid biosynthesis; L-tryptophan biosynthesis; L-tryptophan from chorismate: step 4/5. The polypeptide is Indole-3-glycerol phosphate synthase (Streptococcus pneumoniae serotype 19F (strain G54)).